The chain runs to 105 residues: U2-lycotoxin-Ls1c (105 aa).

An N-terminal signal peptide occupies residues 1–17 (MIKYVLISALLVVAVYS). Residues 18 to 41 (FTIEDSEDALLEEAEDELDTEEER) constitute a propeptide that is removed on maturation. Disulfide bonds link Cys51-Cys67, Cys58-Cys97, Cys60-Cys83, and Cys69-Cys81.

The protein belongs to the neurotoxin 04 (omega-agtx) family. 01 (type I omega-agtx) subfamily. In terms of tissue distribution, expressed by the venom gland.

Its subcellular location is the secreted. Insecticidal to house crickets. It induces an excitatory slow-onset impact that leads to irreversible spastic paralysis. It also modifies human voltage-gated potassium channel Kv1.5/KCNA5. Most likely, it binds to the voltage-sensing domain of the channel, suggesting it does not block the pore but prevents its opening at physiological membrane potentials. The recombinant peptide binds to the channel in an irreversible manner and slows down the hKv1.5 current activation kinetics. It is not toxic to mice, when intracranially injected (at 0.5 ug/g mouse). The polypeptide is U2-lycotoxin-Ls1c (Lycosa singoriensis (Wolf spider)).